A 361-amino-acid polypeptide reads, in one-letter code: MLYPEKFQGIGISNAKDWKHPKLVSFDPKPFGDHDVDVEIEACGICGSDFHIAVGNWGPVPENQILGHEIIGRVVKVGSKCHTGVKIGDRVGVGAQALACFECERCKSDNEQYCTNDHVLTMWTPYKDGYISQGGFASHVRLHEHFAIQIPENIPSPLAAPLLCGGITVFSPLLRNGCGPGKRVGIVGIGGIGHMGILLAKAMGAEVYAFSRGHSKREDSMKLGADHYIAMLEDKGWTEQYSNALDLLVVCSSSLSKVNFDSIVKIMKIGGSIVSIAAPEVNEKLVLKPLGLMGVSISSSAIGSRKEIEQLLKLVSEKNVKIWVEKLPISEEGVSHAFTRMESGDVKYRFTLVDYDKKFHK.

A Zn(2+)-binding site is contributed by Cys-46. The NADP(+) site is built by Gly-47 and His-51. Zn(2+)-binding residues include His-68, Cys-100, Cys-103, Cys-106, Cys-114, and Cys-164. Residues Ile-189, Gly-191, Ile-192, Ser-211, Arg-212, Lys-216, Cys-251, Ser-253, Ser-256, Ile-276, Ser-300, and Ile-302 each coordinate NADP(+). Ser-316 is subject to Phosphoserine. Residue Arg-349 coordinates NADP(+).

The protein belongs to the zinc-containing alcohol dehydrogenase family. As to quaternary structure, homodimer. Requires Zn(2+) as cofactor.

It catalyses the reaction a primary alcohol + NADP(+) = an aldehyde + NADPH + H(+). The enzyme catalyses (E)-cinnamyl alcohol + NADP(+) = (E)-cinnamaldehyde + NADPH + H(+). It carries out the reaction 3-methylbutanol + NADP(+) = 3-methylbutanal + NADPH + H(+). Functionally, NADP-dependent alcohol dehydrogenase with a broad substrate specificity. The oxidative reactions are more than 100 times less efficient than the corresponding reductions, suggesting that the enzyme acts as an aldehyde reductase, rather than as an alcohol dehydrogenase. This Saccharomyces cerevisiae (strain ATCC 204508 / S288c) (Baker's yeast) protein is NADP-dependent alcohol dehydrogenase 7 (ADH7).